Reading from the N-terminus, the 686-residue chain is Methionine--tRNA ligase (686 aa).

Positions 15 to 25 (PYANGSIHLGH) match the 'HIGH' region motif. Zn(2+)-binding residues include Cys-146, Cys-149, Cys-159, and Cys-162. Positions 332–336 (KMSKS) match the 'KMSKS' region motif. Lys-335 is a binding site for ATP. A tRNA-binding domain is found at 585–686 (AFEAVDMRIA…EGAQPGMRVM (102 aa)).

It belongs to the class-I aminoacyl-tRNA synthetase family. MetG type 1 subfamily. Homodimer. Zn(2+) serves as cofactor.

The protein resides in the cytoplasm. The enzyme catalyses tRNA(Met) + L-methionine + ATP = L-methionyl-tRNA(Met) + AMP + diphosphate. Is required not only for elongation of protein synthesis but also for the initiation of all mRNA translation through initiator tRNA(fMet) aminoacylation. The protein is Methionine--tRNA ligase of Aliivibrio fischeri (strain ATCC 700601 / ES114) (Vibrio fischeri).